We begin with the raw amino-acid sequence, 564 residues long: Acetylcholine receptor subunit alpha-type deg-3 (564 aa).

The N-terminal stretch at 1-20 (MTLKIRTIIILFCVISVTTT) is a signal peptide. Residues 21 to 268 (SQSLNATLKT…SLVIQRKPLY (248 aa)) lie on the Extracellular side of the membrane. N-linked (GlcNAc...) asparagine glycans are attached at residues N25, N37, N125, and N198. 2 disulfides stabilise this stretch: C185/C199 and C248/C249. Helical transmembrane passes span 269-289 (YLVNLIIPTSIITLVAITGFF), 302-319 (INLGITTLLAMSILMLMV), and 329-353 (FVPLIAWFYLSIIIIISIGTFLTSV). Over 354-526 (VLSVQGRRQY…WEFLATVLDR (173 aa)) the chain is Cytoplasmic. A helical transmembrane segment spans residues 527–547 (FLLIVFVGAVVIVTAGLILVG).

The protein belongs to the ligand-gated ion channel (TC 1.A.9) family. Acetylcholine receptor (TC 1.A.9.1) subfamily. The functional receptor is a heteromer of deg-3 and des-2. Interacts with ric-3; which is required for proper receptor folding.

It localises to the postsynaptic cell membrane. The protein resides in the cell membrane. Its function is as follows. Subunit of the non-synaptic neuronal acetylcholine receptor, which may play a role in chemotaxis towards choline. After binding choline or acetylcholine, the AChR responds by an extensive change in conformation that affects all subunits and leads to opening of an ion-conducting channel across the plasma membrane. This Caenorhabditis elegans protein is Acetylcholine receptor subunit alpha-type deg-3 (deg-3).